The primary structure comprises 112 residues: Thioredoxin (112 aa).

In terms of domain architecture, Thioredoxin spans 2–112 (SEDSATVAVT…ALLRELSDAL (111 aa)). Cys-35 and Cys-38 form a disulfide bridge.

The protein belongs to the thioredoxin family.

Functionally, participates in various redox reactions through the reversible oxidation of its active center dithiol to a disulfide and catalyzes dithiol-disulfide exchange reactions. This Mycolicibacterium smegmatis (Mycobacterium smegmatis) protein is Thioredoxin (trxA).